The following is a 404-amino-acid chain: MKLPIYLDYSATTPVDPRVAEKMMQFLTLDGTFGNPASRSHRFGWQAEEAVDIARNQIAELVGADPREIVFTSGATESDNLAIKGAANFYQKKGKHIITSKTEHKAVLDTCRQLEREGFEVTYLAPQSNGIIDLKALEAAMRDDTILVSIMHVNNEIGVVQDIATIGEMCRARGIIYHVDATQSVGKLPIDLSQLKVDLMSFSGHKIYGPKGIGALYVRRKPRIRIEAQMHGGGHERGMRSGTLPVHQIVGMGEAYRIAKEEMETEMARLRGLRNRLWNGIKDIEEVYLNGDLEQGAPNILNVSFNYVEGESLIMALKDLAVSSGSACTSASLEPSYVLRALGMNDELAHSSIRFSLGRFTTEEEIDYTIDLVRKSIGRLRDLSPLWEMYKQGVDLNSIEWAHH.

Pyridoxal 5'-phosphate is bound by residues 75-76, Asn155, Gln183, and 203-205; these read AT and SGH. Lys206 bears the N6-(pyridoxal phosphate)lysine mark. Thr243 serves as a coordination point for pyridoxal 5'-phosphate. Cys328 functions as the Cysteine persulfide intermediate in the catalytic mechanism. Cys328 contacts [2Fe-2S] cluster.

This sequence belongs to the class-V pyridoxal-phosphate-dependent aminotransferase family. NifS/IscS subfamily. Homodimer. Forms a heterotetramer with IscU, interacts with other sulfur acceptors. The cofactor is pyridoxal 5'-phosphate.

The protein localises to the cytoplasm. It catalyses the reaction (sulfur carrier)-H + L-cysteine = (sulfur carrier)-SH + L-alanine. Its pathway is cofactor biosynthesis; iron-sulfur cluster biosynthesis. Its function is as follows. Master enzyme that delivers sulfur to a number of partners involved in Fe-S cluster assembly, tRNA modification or cofactor biosynthesis. Catalyzes the removal of elemental sulfur and selenium atoms from cysteine and selenocysteine to produce alanine. Functions as a sulfur delivery protein for Fe-S cluster synthesis onto IscU, an Fe-S scaffold assembly protein, as well as other S acceptor proteins. Also functions as a selenium delivery protein in the pathway for the biosynthesis of selenophosphate. The chain is Cysteine desulfurase IscS from Salmonella arizonae (strain ATCC BAA-731 / CDC346-86 / RSK2980).